The following is a 396-amino-acid chain: Elongation factor Tu (396 aa).

The region spanning 10-206 is the tr-type G domain; the sequence is KPHVNVGTIG…ALDSYIPTPE (197 aa). The interval 19–26 is G1; that stretch reads GHVDHGKT. GTP is bound at residue 19-26; it reads GHVDHGKT. Residue T26 participates in Mg(2+) binding. The segment at 60–64 is G2; the sequence is GITIN. Positions 81–84 are G3; it reads DCPG. Residues 81-85 and 136-139 each bind GTP; these read DCPGH and NKCD. Positions 136 to 139 are G4; sequence NKCD. Residues 174 to 176 are G5; sequence SAL.

This sequence belongs to the TRAFAC class translation factor GTPase superfamily. Classic translation factor GTPase family. EF-Tu/EF-1A subfamily. As to quaternary structure, monomer.

The protein resides in the cytoplasm. It catalyses the reaction GTP + H2O = GDP + phosphate + H(+). Its function is as follows. GTP hydrolase that promotes the GTP-dependent binding of aminoacyl-tRNA to the A-site of ribosomes during protein biosynthesis. In Azoarcus sp. (strain BH72), this protein is Elongation factor Tu.